A 98-amino-acid chain; its full sequence is Large ribosomal subunit protein eL21 (98 aa).

The tract at residues 1–23 (MVDRKGKGFRRKTRDKLSKHPRQ) is disordered. Over residues 7–23 (KGFRRKTRDKLSKHPRQ) the composition is skewed to basic residues.

It belongs to the eukaryotic ribosomal protein eL21 family.

In Nanoarchaeum equitans (strain Kin4-M), this protein is Large ribosomal subunit protein eL21.